We begin with the raw amino-acid sequence, 239 residues long: MTSLLVHTYPSLVKGILIKRYKRFFADIQLDNGELITAHCANTGPMTDVCVEGQPVYLSRSDNPKRKLAYTWEMIQLGETWVGVNTNLPNQVVKNALLQGVFPDLVKNETEVRSEVAYGQNNGSRIDFLLTHGDNSLTYIEVKNTTWNQGETALFPDTVTTRGQKHLQELMALLPAAEAIMLYFINRGDCYRFAPGDSKDTKYGQLLRQAVAKGVKVLPCRFQVTPTGIYYLGLAELQL.

This sequence belongs to the SfsA family.

In Microcystis aeruginosa (strain NIES-843 / IAM M-2473), this protein is Sugar fermentation stimulation protein homolog.